Here is a 423-residue protein sequence, read N- to C-terminus: Protein CLP1 homolog (423 aa).

Residues Glu16, Lys57, and 119–124 (DVGKST) contribute to the ATP site.

It belongs to the Clp1 family. Clp1 subfamily.

It is found in the nucleus. Required for endonucleolytic cleavage during polyadenylation-dependent pre-mRNA 3'-end formation. This Drosophila sechellia (Fruit fly) protein is Protein CLP1 homolog (cbc).